The primary structure comprises 226 residues: MNENLFASFITPMILGLPLVTLIVLFPSLLFPTSDRLVNNRFVTLQQWMLQLVSKQMMSIHNPKGQTWTLMLMSLILFIGSTNLLGLLPHSFTPTTQLSMNLGMAISLWAGAVITGFRNKTKTSLAHFLPQGTPTPLIPMLVIIETISLFIQPMALAVRLTANITAGHLLIHLIGGATLALMSISATTALITFIILILLTILEFAVAMIQAYVFTLLVSLYLHDNT.

6 consecutive transmembrane segments (helical) span residues 6 to 26 (FASF…IVLF), 68 to 88 (WTLM…LGLL), 97 to 117 (QLSM…ITGF), 138 to 158 (IPML…ALAV), 164 to 184 (ITAG…LMSI), and 200 to 222 (TILE…SLYL).

It belongs to the ATPase A chain family. Component of the ATP synthase complex composed at least of ATP5F1A/subunit alpha, ATP5F1B/subunit beta, ATP5MC1/subunit c (homooctomer), MT-ATP6/subunit a, MT-ATP8/subunit 8, ATP5ME/subunit e, ATP5MF/subunit f, ATP5MG/subunit g, ATP5MK/subunit k, ATP5MJ/subunit j, ATP5F1C/subunit gamma, ATP5F1D/subunit delta, ATP5F1E/subunit epsilon, ATP5PF/subunit F6, ATP5PB/subunit b, ATP5PD/subunit d, ATP5PO/subunit OSCP. ATP synthase complex consists of a soluble F(1) head domain (subunits alpha(3) and beta(3)) - the catalytic core - and a membrane F(0) domain - the membrane proton channel (subunits c, a, 8, e, f, g, k and j). These two domains are linked by a central stalk (subunits gamma, delta, and epsilon) rotating inside the F1 region and a stationary peripheral stalk (subunits F6, b, d, and OSCP). Interacts with DNAJC30; interaction is direct.

It is found in the mitochondrion inner membrane. The catalysed reaction is H(+)(in) = H(+)(out). In terms of biological role, subunit a, of the mitochondrial membrane ATP synthase complex (F(1)F(0) ATP synthase or Complex V) that produces ATP from ADP in the presence of a proton gradient across the membrane which is generated by electron transport complexes of the respiratory chain. ATP synthase complex consist of a soluble F(1) head domain - the catalytic core - and a membrane F(1) domain - the membrane proton channel. These two domains are linked by a central stalk rotating inside the F(1) region and a stationary peripheral stalk. During catalysis, ATP synthesis in the catalytic domain of F(1) is coupled via a rotary mechanism of the central stalk subunits to proton translocation. With the subunit c (ATP5MC1), forms the proton-conducting channel in the F(0) domain, that contains two crucial half-channels (inlet and outlet) that facilitate proton movement from the mitochondrial intermembrane space (IMS) into the matrix. Protons are taken up via the inlet half-channel and released through the outlet half-channel, following a Grotthuss mechanism. This is ATP synthase F(0) complex subunit a from Bos mutus grunniens (Wild yak).